The sequence spans 244 residues: Lipoprotein-releasing system ATP-binding protein LolD (244 aa).

Residues 19–244 enclose the ABC transporter domain; the sequence is IRAEALAKTY…KLRELAPSAV (226 aa). 55 to 62 is an ATP binding site; sequence GASGAGKS.

Belongs to the ABC transporter superfamily. Lipoprotein translocase (TC 3.A.1.125) family. The complex is composed of two ATP-binding proteins (LolD) and two transmembrane proteins (LolC and LolE).

It is found in the cell inner membrane. Part of the ABC transporter complex LolCDE involved in the translocation of mature outer membrane-directed lipoproteins, from the inner membrane to the periplasmic chaperone, LolA. Responsible for the formation of the LolA-lipoprotein complex in an ATP-dependent manner. In Xanthomonas oryzae pv. oryzae (strain MAFF 311018), this protein is Lipoprotein-releasing system ATP-binding protein LolD.